Reading from the N-terminus, the 397-residue chain is MYDLPDKRGHFGPYGGTFVAETLISALDELCKQYEYYRDDAEFQAEFFHELKHYVGRPSPIYHAKRWSEHLGGAQILLKREDLNHTGAHKVNNTVGQALLARRMGKGRIIAETGAGQHGVASATVAARYGMECVVYMGSEDVKRQATNVYRMKLLGATVIPVDSGSCTLKDALNEAMRDWVTNVSNTYYIIGTVAGPHPYPMMVRDFQAIIGNEARQQMREEYGRQPDALIACVGGGSNAIGLFYPYIDEENVRMIGVEAAGKGIDTHEHAATLVTGRPGVLHGNRTYLIQDENGQIIETHSISAGLDYPGVGPEHAWLKDCGRAEYVAVTDDEALAAFHALCRFEGIIPALESSHALAYAAKLAPTLNKDQLLLVNLSGRGDKDMATVAQQSGISL.

N6-(pyridoxal phosphate)lysine is present on Lys-90.

Belongs to the TrpB family. In terms of assembly, tetramer of two alpha and two beta chains. Pyridoxal 5'-phosphate is required as a cofactor.

It catalyses the reaction (1S,2R)-1-C-(indol-3-yl)glycerol 3-phosphate + L-serine = D-glyceraldehyde 3-phosphate + L-tryptophan + H2O. It functions in the pathway amino-acid biosynthesis; L-tryptophan biosynthesis; L-tryptophan from chorismate: step 5/5. In terms of biological role, the beta subunit is responsible for the synthesis of L-tryptophan from indole and L-serine. The sequence is that of Tryptophan synthase beta chain from Nitrosomonas europaea (strain ATCC 19718 / CIP 103999 / KCTC 2705 / NBRC 14298).